Consider the following 234-residue polypeptide: Thrombin-like enzyme ancrod (234 aa).

The Peptidase S1 domain maps to 1–227; it reads VIGGDECNIN…YRDWVNNVIA (227 aa). 6 disulfides stabilise this stretch: Cys7–Cys141, Cys28–Cys44, Cys78–Cys232, Cys120–Cys188, Cys152–Cys167, and Cys178–Cys203. N-linked (GlcNAc...) asparagine glycosylation is present at Asn23. His43 acts as the Charge relay system in catalysis. Asn79 carries N-linked (GlcNAc...) asparagine glycosylation. The Charge relay system role is filled by Asp88. Residues Asn99 and Asn148 are each glycosylated (N-linked (GlcNAc...) asparagine). The active-site Charge relay system is the Ser182. Residue Asn229 is glycosylated (N-linked (GlcNAc...) asparagine).

This sequence belongs to the peptidase S1 family. Snake venom subfamily. Monomer. In terms of tissue distribution, expressed by the venom gland.

The protein localises to the secreted. It carries out the reaction Selective cleavage of Arg-|-Xaa bond in fibrinogen, to form fibrin, and release fibrinopeptide A. The specificity of further degradation of fibrinogen varies with species origin of the enzyme.. Functionally, thrombin-like snake venom serine protease that acts as an anticoagulant. It cleaves fibrinogen (FGA) to split off the A-fibrinopeptides (A, AY and AP), but not the B-fibrinopeptide. The resulting fibrin polymers are imperfectly formed and much smaller in size (1 to 2 um long) than the fibrin polymers produced by the action of thrombin. These ancrod-induced microthrombi are friable, unstable, urea-soluble and have significantly degraded alpha chains. They do not cross-link to form thrombi. They are markedly susceptible to digestion by plasmin and are rapidly removed from circulation by either reticuloendothelial phagocytosis or normal fibrinolysis, or both. Anticoagulation through the removal of fibrinogen from the blood is rapid, occurring within hours following its administration. It does not activate plasminogen and does not degrade preformed, fully cross-linked thrombin fibrin. It also reduces the level of plasminogen activator inhibitor (PAI) and may stimulate the release of tissue plasminogen activator (PLAT) from the endothelium. The profibrinolytic effect of these 2 actions appears to be limited to local microthrombus degradation. The protein is Thrombin-like enzyme ancrod of Calloselasma rhodostoma (Malayan pit viper).